A 309-amino-acid polypeptide reads, in one-letter code: Branched-chain-amino-acid aminotransferase (309 aa).

K160 carries the post-translational modification N6-(pyridoxal phosphate)lysine.

The protein belongs to the class-IV pyridoxal-phosphate-dependent aminotransferase family. In terms of assembly, homohexamer. Requires pyridoxal 5'-phosphate as cofactor.

It carries out the reaction L-leucine + 2-oxoglutarate = 4-methyl-2-oxopentanoate + L-glutamate. The enzyme catalyses L-isoleucine + 2-oxoglutarate = (S)-3-methyl-2-oxopentanoate + L-glutamate. The catalysed reaction is L-valine + 2-oxoglutarate = 3-methyl-2-oxobutanoate + L-glutamate. Its pathway is amino-acid biosynthesis; L-isoleucine biosynthesis; L-isoleucine from 2-oxobutanoate: step 4/4. It functions in the pathway amino-acid biosynthesis; L-leucine biosynthesis; L-leucine from 3-methyl-2-oxobutanoate: step 4/4. It participates in amino-acid biosynthesis; L-valine biosynthesis; L-valine from pyruvate: step 4/4. In terms of biological role, acts on leucine, isoleucine and valine. The protein is Branched-chain-amino-acid aminotransferase (ilvE) of Escherichia coli O157:H7.